The sequence spans 490 residues: Glutamyl-tRNA(Gln) amidotransferase subunit A (490 aa).

Active-site charge relay system residues include lysine 78 and serine 159. The Acyl-ester intermediate role is filled by serine 183.

Belongs to the amidase family. GatA subfamily. In terms of assembly, heterotrimer of A, B and C subunits.

It catalyses the reaction L-glutamyl-tRNA(Gln) + L-glutamine + ATP + H2O = L-glutaminyl-tRNA(Gln) + L-glutamate + ADP + phosphate + H(+). Allows the formation of correctly charged Gln-tRNA(Gln) through the transamidation of misacylated Glu-tRNA(Gln) in organisms which lack glutaminyl-tRNA synthetase. The reaction takes place in the presence of glutamine and ATP through an activated gamma-phospho-Glu-tRNA(Gln). This Paramagnetospirillum magneticum (strain ATCC 700264 / AMB-1) (Magnetospirillum magneticum) protein is Glutamyl-tRNA(Gln) amidotransferase subunit A.